A 459-amino-acid polypeptide reads, in one-letter code: MSNKAWGGRFEVQPEEWVDDFNASITFDQTLIDQDIEGSIAHATMLANQGIISQQDSEQIIQGLKSIQHDYHQDQIQFSASLEDIHLNIEHELIKRIGDAGGKLHTGRSRNDQVATDMHLYTKKQVQDIIALIKSLQSVIVDIASNNVDTIMPGYTHLQRAQPISFAHHIMTYFWMLQRDQQRFEDSLKRIDINPLGAAALSGTTYPIDRHETTALLNFGSLYENSLDAVSDRDYIIETLHNISLTMVHLSRFAEEIIFWSTDEAKFITLSDAFSTGSSIMPQKKNPDMAELIRGKVGRTTGHLMSMLMTLKGLPLAYNKDMQEDKEGLFDAVHTIKGSLRIFEGMIQTMTINKERLNQTVKEDFSNATELADYLVTKNIPFRTAHEIVGKIVLECIQQGHYLLDVPLSTYQQHHSSIDADIYDYLQPENCLKRRQSYGSTGQSSVKQQLDVAKQLLSQ.

This sequence belongs to the lyase 1 family. Argininosuccinate lyase subfamily.

It localises to the cytoplasm. The catalysed reaction is 2-(N(omega)-L-arginino)succinate = fumarate + L-arginine. It functions in the pathway amino-acid biosynthesis; L-arginine biosynthesis; L-arginine from L-ornithine and carbamoyl phosphate: step 3/3. This Staphylococcus aureus (strain MRSA252) protein is Argininosuccinate lyase.